Reading from the N-terminus, the 482-residue chain is Putative dipeptidase NECHADRAFT_87110 (482 aa).

Residues 1-21 are compositionally biased toward polar residues; the sequence is MADTQTPNLQNTAEGDANTSA. The segment at 1 to 24 is disordered; sequence MADTQTPNLQNTAEGDANTSAENE. N-linked (GlcNAc...) asparagine glycosylation is present at Asn-18. A helical membrane pass occupies residues 41–61; the sequence is WLRYPFLVAGIALFLGPFSFF. Zn(2+) is bound by residues His-90, Asp-92, and Glu-201. Cys-141 and Cys-230 are oxidised to a cystine. His-228 serves as a coordination point for substrate. Residues His-272 and His-293 each contribute to the Zn(2+) site. Substrate-binding residues include Arg-304 and Asp-364.

It belongs to the metallo-dependent hydrolases superfamily. Peptidase M19 family. The cofactor is Zn(2+).

It localises to the membrane. The catalysed reaction is an L-aminoacyl-L-amino acid + H2O = 2 an L-alpha-amino acid. Its function is as follows. Hydrolyzes a wide range of dipeptides. The protein is Putative dipeptidase NECHADRAFT_87110 of Fusarium vanettenii (strain ATCC MYA-4622 / CBS 123669 / FGSC 9596 / NRRL 45880 / 77-13-4) (Fusarium solani subsp. pisi).